The following is a 195-amino-acid chain: MLVPTVIEQTARGERAYDIYSRLLKDRIIMLSGEINDQMANSIIAQLLFLDAQDNTKDISLYINSPGGVITSGLAIMDTMNFIKSDVSTIAIGMAASMASILLTSGTKGKRFALPNSTVLIHQPLGGAQGQQTDIQIAANEILKSRKKLNQILHETTGQPLDKILKDTERDNYLSAEEAKDYGLIDEILVNQKKD.

Ser97 acts as the Nucleophile in catalysis. His122 is a catalytic residue.

It belongs to the peptidase S14 family. Fourteen ClpP subunits assemble into 2 heptameric rings which stack back to back to give a disk-like structure with a central cavity, resembling the structure of eukaryotic proteasomes.

It is found in the cytoplasm. The enzyme catalyses Hydrolysis of proteins to small peptides in the presence of ATP and magnesium. alpha-casein is the usual test substrate. In the absence of ATP, only oligopeptides shorter than five residues are hydrolyzed (such as succinyl-Leu-Tyr-|-NHMec, and Leu-Tyr-Leu-|-Tyr-Trp, in which cleavage of the -Tyr-|-Leu- and -Tyr-|-Trp bonds also occurs).. Its function is as follows. Cleaves peptides in various proteins in a process that requires ATP hydrolysis. Has a chymotrypsin-like activity. Plays a major role in the degradation of misfolded proteins. The protein is ATP-dependent Clp protease proteolytic subunit of Lactobacillus gasseri (strain ATCC 33323 / DSM 20243 / BCRC 14619 / CIP 102991 / JCM 1131 / KCTC 3163 / NCIMB 11718 / NCTC 13722 / AM63).